Consider the following 474-residue polypeptide: Aspartyl protease family protein At5g10770 (474 aa).

The signal sequence occupies residues 1-25 (MSINRNLLNIIIILCICLNLGCNDG). Residues 132–469 (YIVTVGLGTP…DGAGGRVGFA (338 aa)) form the Peptidase A1 domain. Catalysis depends on residues Asp150 and Asp352. An intrachain disulfide couples Cys391 to Cys432. Asn443 carries GPI-anchor amidated asparagine lipidation. Positions 444–474 (AAIFGNVQQQTLEVVYDGAGGRVGFAPNGCS) are cleaved as a propeptide — removed in mature form.

This sequence belongs to the peptidase A1 family.

The protein localises to the cell membrane. Functionally, probably not redundant with AED1 and not involved in restriction of salicylic acid (SA) or systemic acquired resistance (SAR) signaling. This is Aspartyl protease family protein At5g10770 from Arabidopsis thaliana (Mouse-ear cress).